A 519-amino-acid polypeptide reads, in one-letter code: Cytochrome P450 monooxygenase easM (519 aa).

The helical transmembrane segment at 16 to 33 (VAPALFASSISVLFLILS) threads the bilayer. Asparagine 50 and asparagine 353 each carry an N-linked (GlcNAc...) asparagine glycan. Cysteine 458 is a heme binding site.

Belongs to the cytochrome P450 family. Heme is required as a cofactor.

It is found in the membrane. It participates in alkaloid biosynthesis; ergot alkaloid biosynthesis. Cytochrome P450 monooxygenase; part of the gene cluster that mediates the biosynthesis of fumiclavanine C, a fungal ergot alkaloid. DmaW catalyzes the first step of ergot alkaloid biosynthesis by condensing dimethylallyl diphosphate (DMAP) and tryptophan to form 4-dimethylallyl-L-tryptophan. The second step is catalyzed by the methyltransferase easF that methylates 4-dimethylallyl-L-tryptophan in the presence of S-adenosyl-L-methionine, resulting in the formation of 4-dimethylallyl-L-abrine. The catalase easC and the FAD-dependent oxidoreductase easE then transform 4-dimethylallyl-L-abrine to chanoclavine-I which is further oxidized by EasD in the presence of NAD(+), resulting in the formation of chanoclavine-I aldehyde. EasA reduces chanoclavine-I aldehyde to dihydrochanoclavine-I aldehyde that spontaneously dehydrates to form 6,8-dimethyl-6,7-didehydroergoline. EasG then catalyzes the reduction of 6,8-dimethyl-6,7-didehydroergoline to form festuclavine. Hydrolysis of festuclavine by easM then leads to the formation of fumigaclavine B which is in turn acetylated by easN to fumigaclavine A. Finally, easL catalyzes the conversion of fumigaclavine A into fumigaclavine C by attaching a dimethylallyl moiety to C-2 of the indole nucleus. The protein is Cytochrome P450 monooxygenase easM of Aspergillus fumigatus (strain ATCC MYA-4609 / CBS 101355 / FGSC A1100 / Af293) (Neosartorya fumigata).